Here is an 861-residue protein sequence, read N- to C-terminus: Cone cGMP-specific 3',5'-cyclic phosphodiesterase subunit alpha' (861 aa).

GAF domains follow at residues 75–224 (SAEQ…AVAL) and 256–433 (DVER…GWSL). Residues Ser97, Asn116, 169-172 (DKQT), and Thr176 each bind 3',5'-cyclic GMP. One can recognise a PDEase domain in the interval 486–819 (EERQLLAILK…VEWKSLAEEY (334 aa)). The active-site Proton donor is His562. Residues His566, His602, Asp603, and Asp723 each coordinate a divalent metal cation. The segment covering 826 to 839 (TEEEAGKQEEEASD) has biased composition (basic and acidic residues). Residues 826–861 (TEEEAGKQEEEASDGKAATDLGGSAEDKKSKTCLML) are disordered. Cys858 carries the post-translational modification Cysteine methyl ester. The S-geranylgeranyl cysteine moiety is linked to residue Cys858. A propeptide spans 859–861 (LML) (removed in mature form).

It belongs to the cyclic nucleotide phosphodiesterase family. In terms of assembly, composed of two alpha' subunits that are associated with 3 smaller proteins of 11, 13, and 15 kDa. The cofactor is a divalent metal cation.

It is found in the cell membrane. It carries out the reaction 3',5'-cyclic GMP + H2O = GMP + H(+). Its function is as follows. As cone-specific cGMP phosphodiesterase, it plays an essential role in light detection and cone phototransduction by rapidly decreasing intracellular levels of cGMP. In Mus musculus (Mouse), this protein is Cone cGMP-specific 3',5'-cyclic phosphodiesterase subunit alpha' (Pde6c).